Here is a 312-residue protein sequence, read N- to C-terminus: Aspartate carbamoyltransferase catalytic subunit (312 aa).

Residues Arg-55 and Thr-56 each coordinate carbamoyl phosphate. Lys-83 serves as a coordination point for L-aspartate. Carbamoyl phosphate-binding residues include Arg-105, His-138, and Gln-141. Arg-171 and Arg-225 together coordinate L-aspartate. Carbamoyl phosphate is bound by residues Gly-266 and Pro-267.

The protein belongs to the aspartate/ornithine carbamoyltransferase superfamily. ATCase family. As to quaternary structure, heterododecamer (2C3:3R2) of six catalytic PyrB chains organized as two trimers (C3), and six regulatory PyrI chains organized as three dimers (R2).

The enzyme catalyses carbamoyl phosphate + L-aspartate = N-carbamoyl-L-aspartate + phosphate + H(+). It participates in pyrimidine metabolism; UMP biosynthesis via de novo pathway; (S)-dihydroorotate from bicarbonate: step 2/3. Functionally, catalyzes the condensation of carbamoyl phosphate and aspartate to form carbamoyl aspartate and inorganic phosphate, the committed step in the de novo pyrimidine nucleotide biosynthesis pathway. The sequence is that of Aspartate carbamoyltransferase catalytic subunit from Corynebacterium glutamicum (strain ATCC 13032 / DSM 20300 / JCM 1318 / BCRC 11384 / CCUG 27702 / LMG 3730 / NBRC 12168 / NCIMB 10025 / NRRL B-2784 / 534).